The sequence spans 455 residues: EP1-like glycoprotein 2 (455 aa).

Residues 1–22 (MSRFAILVTLALAIATVSVVIA) form the signal peptide. Residues 44-163 (EYDASYRFIE…NGKFVWQSFD (120 aa)) form the Bulb-type lectin domain. N56, N106, N191, N211, N241, and N289 each carry an N-linked (GlcNAc...) asparagine glycan. The residue at position 374 (C374) is an S-nitrosocysteine. The region spanning 374–455 (CSGVKGKTVN…NTSSVAYIKY (82 aa)) is the PAN domain. Cystine bridges form between C410-C432 and C414-C420. N-linked (GlcNAc...) asparagine glycosylation occurs at N446.

The protein localises to the secreted. The protein resides in the cell wall. In Arabidopsis thaliana (Mouse-ear cress), this protein is EP1-like glycoprotein 2.